Consider the following 363-residue polypeptide: Isopentenyl-diphosphate delta-isomerase (363 aa).

7 to 8 (RK) provides a ligand contact to substrate. FMN-binding positions include 71–73 (AMT), Ser101, and Asn130. Residue Gln160 coordinates substrate. Glu161 is a binding site for Mg(2+). FMN contacts are provided by residues Lys192, Ser217, Thr222, 270–272 (GIR), and 291–292 (AG).

The protein belongs to the IPP isomerase type 2 family. In terms of assembly, homooctamer. Dimer of tetramers. FMN serves as cofactor. It depends on NADPH as a cofactor. Requires Mg(2+) as cofactor.

It is found in the cytoplasm. It carries out the reaction isopentenyl diphosphate = dimethylallyl diphosphate. In terms of biological role, involved in the biosynthesis of isoprenoids. Catalyzes the 1,3-allylic rearrangement of the homoallylic substrate isopentenyl (IPP) to its allylic isomer, dimethylallyl diphosphate (DMAPP). This is Isopentenyl-diphosphate delta-isomerase from Symbiobacterium thermophilum (strain DSM 24528 / JCM 14929 / IAM 14863 / T).